Consider the following 752-residue polypeptide: Photosystem I P700 chlorophyll a apoprotein A1 (752 aa).

The next 8 membrane-spanning stretches (helical) occupy residues 73–96, 159–182, 198–222, 294–312, 349–372, 388–414, 436–458, and 533–551; these read IFSA…FHGA, LYVT…FHYH, LNHH…HVSL, IAHH…GHMY, WHAN…HHMY, LSLF…IFMI, ALIS…LYIH, and FMVH…LILL. Positions 575 and 584 each coordinate [4Fe-4S] cluster. The next 2 membrane-spanning stretches (helical) occupy residues 591-612 and 666-688; these read HVFL…HFSW and ISAY…MFLF. His-677 lines the chlorophyll a' pocket. 2 residues coordinate chlorophyll a: Met-685 and Tyr-693. Trp-694 serves as a coordination point for phylloquinone. Residues 726 to 746 traverse the membrane as a helical segment; that stretch reads AVGAAHYLLGGIATTWAFFLS.

It belongs to the PsaA/PsaB family. In terms of assembly, the PsaA/B heterodimer binds the P700 chlorophyll special pair and subsequent electron acceptors. PSI consists of a core antenna complex that captures photons, and an electron transfer chain that converts photonic excitation into a charge separation. The eukaryotic PSI reaction center is composed of at least 11 subunits. P700 is a chlorophyll a/chlorophyll a' dimer, A0 is one or more chlorophyll a, A1 is one or both phylloquinones and FX is a shared 4Fe-4S iron-sulfur center. serves as cofactor.

It localises to the plastid. It is found in the chloroplast thylakoid membrane. The enzyme catalyses reduced [plastocyanin] + hnu + oxidized [2Fe-2S]-[ferredoxin] = oxidized [plastocyanin] + reduced [2Fe-2S]-[ferredoxin]. In terms of biological role, psaA and PsaB bind P700, the primary electron donor of photosystem I (PSI), as well as the electron acceptors A0, A1 and FX. PSI is a plastocyanin/cytochrome c6-ferredoxin oxidoreductase, converting photonic excitation into a charge separation, which transfers an electron from the donor P700 chlorophyll pair to the spectroscopically characterized acceptors A0, A1, FX, FA and FB in turn. Oxidized P700 is reduced on the lumenal side of the thylakoid membrane by plastocyanin or cytochrome c6. The polypeptide is Photosystem I P700 chlorophyll a apoprotein A1 (Cyanidium caldarium (Red alga)).